A 377-amino-acid chain; its full sequence is Nuclear pore complex protein NUP54 (377 aa).

A compositionally biased stretch (low complexity) spans 1 to 18 (MFGTPSSSPSFGTPSSTP). Positions 1-104 (MFGTPSSSPS…NTAQQQQQTP (104 aa)) are disordered. 7 consecutive repeat copies span residues 2-3 (FG), 11-12 (FG), 20-21 (FG), 27-28 (FG), 36-37 (FG), 49-50 (FG), and 87-88 (FG). The tract at residues 2–88 (FGTPSSSPSF…FQQQPSSNFG (87 aa)) is 7 X 2 AA repeats of F-G. Polar residues predominate over residues 19–32 (AFGTSSPAFGTPSA). Over residues 39–104 (PSNPSFSSGG…NTAQQQQQTP (66 aa)) the composition is skewed to low complexity.

This sequence belongs to the NUP54 family. As to quaternary structure, part of the nuclear pore complex (NPC). The NPC has an eight-fold symmetrical structure comprising a central transport channel and two rings, the cytoplasmic and nuclear rings, to which eight filaments are attached. The cytoplasmic filaments have loose ends, while the nuclear filaments are joined in a distal ring, forming a nuclear basket. NPCs are highly dynamic in configuration and composition, and can be devided in 3 subcomplexes, the NUP62 subcomplex, the NUP107-160 subcomplex and the NUP93 subcomplex, containing approximately 30 different nucleoporin proteins.

The protein resides in the nucleus envelope. The protein localises to the nucleus. It localises to the nuclear pore complex. In Arabidopsis thaliana (Mouse-ear cress), this protein is Nuclear pore complex protein NUP54.